Reading from the N-terminus, the 143-residue chain is CRISPR-associated endoribonuclease Cas2 (143 aa).

D14 contributes to the Mg(2+) binding site.

The protein belongs to the CRISPR-associated endoribonuclease Cas2 protein family. Homodimer, forms a heterotetramer with a Cas1 homodimer. Mg(2+) is required as a cofactor.

Its function is as follows. CRISPR (clustered regularly interspaced short palindromic repeat), is an adaptive immune system that provides protection against mobile genetic elements (viruses, transposable elements and conjugative plasmids). CRISPR clusters contain sequences complementary to antecedent mobile elements and target invading nucleic acids. CRISPR clusters are transcribed and processed into CRISPR RNA (crRNA). Functions as a ssRNA-specific endoribonuclease. Involved in the integration of spacer DNA into the CRISPR cassette. In Campylobacter jejuni subsp. jejuni serotype O:2 (strain ATCC 700819 / NCTC 11168), this protein is CRISPR-associated endoribonuclease Cas2.